Consider the following 311-residue polypeptide: uncharacterized protein (311 aa).

9 helical membrane passes run Leu11–Ser31, Val34–Leu54, Leu72–Ile92, His101–Gln121, Ile147–Met167, Trp198–Ser218, Gly233–Ile253, Phe257–Leu277, and Thr279–Pro299.

It localises to the cell membrane. This is an uncharacterized protein from Mycoplasma pneumoniae (strain ATCC 29342 / M129 / Subtype 1) (Mycoplasmoides pneumoniae).